Here is a 391-residue protein sequence, read N- to C-terminus: S-adenosylmethionine synthase (391 aa).

The segment at Met-1–Lys-20 is disordered. His-17 lines the ATP pocket. Position 19 (Asp-19) interacts with Mg(2+). Glu-45 serves as a coordination point for K(+). Residues Glu-58 and Gln-102 each contribute to the L-methionine site. The tract at residues Gln-102–Ala-112 is flexible loop. Residues Asp-169–Lys-171, Lys-235–Phe-236, Asp-244, Arg-250–Lys-251, Ala-267, and Lys-271 contribute to the ATP site. Asp-244 is an L-methionine binding site. Lys-275 serves as a coordination point for L-methionine.

It belongs to the AdoMet synthase family. Homotetramer; dimer of dimers. Mg(2+) is required as a cofactor. The cofactor is K(+).

The protein resides in the cytoplasm. It carries out the reaction L-methionine + ATP + H2O = S-adenosyl-L-methionine + phosphate + diphosphate. It functions in the pathway amino-acid biosynthesis; S-adenosyl-L-methionine biosynthesis; S-adenosyl-L-methionine from L-methionine: step 1/1. Functionally, catalyzes the formation of S-adenosylmethionine (AdoMet) from methionine and ATP. The overall synthetic reaction is composed of two sequential steps, AdoMet formation and the subsequent tripolyphosphate hydrolysis which occurs prior to release of AdoMet from the enzyme. The protein is S-adenosylmethionine synthase of Methylorubrum extorquens (strain CM4 / NCIMB 13688) (Methylobacterium extorquens).